The sequence spans 811 residues: Transmembrane protease serine 6 (811 aa).

Residues 1–48 are disordered; it reads MPRCFQLPCSTRMPTTEVPQAADGQGDAGDGEEAAEPEGKFKPPKNTK. At 1-59 the chain is on the cytoplasmic side; the sequence is MPRCFQLPCSTRMPTTEVPQAADGQGDAGDGEEAAEPEGKFKPPKNTKRKNRDYVRFTP. Positions 8–18 are enriched in polar residues; it reads PCSTRMPTTEV. The helical; Signal-anchor for type II membrane protein transmembrane segment at 60–80 threads the bilayer; it reads LLLVLAALVSAGVMLWYFLGY. At 81–811 the chain is on the extracellular side; sequence KAEVTVSQVY…VINWIQQVLT (731 aa). The SEA domain maps to 86–209; that stretch reads VSQVYSGSLR…EGLVILEASV (124 aa). Residues N138, N184, N216, N338, N433, and N453 are each glycosylated (N-linked (GlcNAc...) asparagine). 2 CUB domains span residues 213–336 and 323–440; these read VVLN…QDCQ and FLLS…QISL. C335 and C366 are disulfide-bonded. LDL-receptor class A domains follow at residues 445-477, 478-514, and 518-555; these read VQVYYSLYNQSDPCPGEFLCSVNGLCVPACDGI, KDCPNGLDERNCVCRAMFQCQEDSTCISLPRVCDRQP, and NGSDEEQCQEGVPCGTFTFQCEDRSCVKKPNPECDGQS. Disulfide bonds link C458-C470, C464-C480, C474-C489, C491-C503, C497-C516, C510-C525, C531-C543, C538-C557, C551-C566, and C602-C618. A glycan (N-linked (GlcNAc...) asparagine) is linked at N518. Residues 577 to 811 form the Peptidase S1 domain; sequence IVGGTVSSEG…VINWIQQVLT (235 aa). Active-site charge relay system residues include H617 and D668. Cystine bridges form between C702–C768, C733–C747, and C758–C787. S762 (charge relay system) is an active-site residue.

Belongs to the peptidase S1 family. As to quaternary structure, interacts with HJV. The single-chain zymogen undergoes autoproteolytic processing. This results in TMPRSS6 shedding from the cell surface and conversion into an activated two-chains form which is released extracellularly. The process involves a trans-activation mechanism that requires TMPRSS6 oligomerization. As to expression, expressed at highest levels in adult mice liver, kidney and uterus. Also strongly expressed within the nasal cavity by olfactory epithelial cells. A weak, but detectable, signal in adult mice tissues analyzed including brain, lung, heart, kidney, spleen, muscle, intestine, thymus and pancreas. No signal in residual embryonic yolk sac, developing kidney tubules or in embryonic tissues analyzed including lung, heart, gastrointestinal tract and epithelium of the oral cavity.

It localises to the cell membrane. Functionally, membrane-bound serine protease. Through the cleavage of cell surface HJV, a regulator of the expression of the iron absorption-regulating hormone hepicidin/HAMP, plays a role in iron homeostasis. This is Transmembrane protease serine 6 (Tmprss6) from Mus musculus (Mouse).